Reading from the N-terminus, the 105-residue chain is Heat shock protein HspQ (105 aa).

Positions 80–105 (AHPEQPSLDELAASIRHQLQAPHLRN) are disordered.

The protein belongs to the HspQ family.

It localises to the cytoplasm. Involved in the degradation of certain denaturated proteins, including DnaA, during heat shock stress. This chain is Heat shock protein HspQ, found in Yersinia pseudotuberculosis serotype O:1b (strain IP 31758).